A 397-amino-acid chain; its full sequence is Chorismate synthase (397 aa).

Residues Arg-40 and Arg-46 each contribute to the NADP(+) site. FMN-binding positions include 129–131 (RSS), 257–258 (QA), Gly-302, 317–321 (KPISS), and Arg-343.

Belongs to the chorismate synthase family. In terms of assembly, homotetramer. FMNH2 serves as cofactor.

It catalyses the reaction 5-O-(1-carboxyvinyl)-3-phosphoshikimate = chorismate + phosphate. It functions in the pathway metabolic intermediate biosynthesis; chorismate biosynthesis; chorismate from D-erythrose 4-phosphate and phosphoenolpyruvate: step 7/7. Catalyzes the anti-1,4-elimination of the C-3 phosphate and the C-6 proR hydrogen from 5-enolpyruvylshikimate-3-phosphate (EPSP) to yield chorismate, which is the branch point compound that serves as the starting substrate for the three terminal pathways of aromatic amino acid biosynthesis. This reaction introduces a second double bond into the aromatic ring system. The sequence is that of Chorismate synthase from Pelodictyon phaeoclathratiforme (strain DSM 5477 / BU-1).